We begin with the raw amino-acid sequence, 331 residues long: Ornithine carbamoyltransferase (331 aa).

Carbamoyl phosphate is bound by residues 57–60 (STRT), glutamine 82, arginine 106, and 133–136 (HPTQ). L-ornithine contacts are provided by residues asparagine 166, aspartate 230, and 234–235 (SM). Carbamoyl phosphate contacts are provided by residues 272 to 273 (CL) and arginine 317.

This sequence belongs to the aspartate/ornithine carbamoyltransferase superfamily. OTCase family.

Its subcellular location is the cytoplasm. It catalyses the reaction carbamoyl phosphate + L-ornithine = L-citrulline + phosphate + H(+). It functions in the pathway amino-acid degradation; L-arginine degradation via ADI pathway; carbamoyl phosphate from L-arginine: step 2/2. In terms of biological role, reversibly catalyzes the transfer of the carbamoyl group from carbamoyl phosphate (CP) to the N(epsilon) atom of ornithine (ORN) to produce L-citrulline. This chain is Ornithine carbamoyltransferase, found in Clostridium perfringens (strain SM101 / Type A).